A 211-amino-acid chain; its full sequence is MRKLSFLDRVVEEIDSYARFTKHPLNPNRKSPSANTVDGQLSDNDKKHAAGLMRVDYTGEICAQGLYRGQASVAKSAQTKEHLYHAADEEYDHLAWCAERLEELGAKPSLLNPFWYWASFGIGATAGSISDSLSYGFVVETEKQVMKHLDSHLKNLPVNDNRSREILKQMYLDESEHAVEAQKAGGKKLPKPVKAIMKLQSKVMTTLAYRF.

Residues 22–43 (KHPLNPNRKSPSANTVDGQLSD) form a disordered region. The segment covering 28–42 (NRKSPSANTVDGQLS) has biased composition (polar residues). Fe cation is bound by residues E60, E90, H93, E142, E174, and H177.

It belongs to the COQ7 family. The cofactor is Fe cation.

The protein localises to the cell membrane. The catalysed reaction is a 5-methoxy-2-methyl-3-(all-trans-polyprenyl)benzene-1,4-diol + AH2 + O2 = a 3-demethylubiquinol + A + H2O. It participates in cofactor biosynthesis; ubiquinone biosynthesis. Catalyzes the hydroxylation of 2-nonaprenyl-3-methyl-6-methoxy-1,4-benzoquinol during ubiquinone biosynthesis. The chain is 3-demethoxyubiquinol 3-hydroxylase from Francisella philomiragia subsp. philomiragia (strain ATCC 25017 / CCUG 19701 / FSC 153 / O#319-036).